The primary structure comprises 368 residues: o-succinylbenzoate synthase (368 aa).

K183 serves as the catalytic Proton donor. Mg(2+) is bound by residues D213, E239, and D264. Catalysis depends on K290, which acts as the Proton acceptor.

Belongs to the mandelate racemase/muconate lactonizing enzyme family. MenC type 1 subfamily. As to quaternary structure, monomer. It depends on a divalent metal cation as a cofactor.

The catalysed reaction is (1R,6R)-6-hydroxy-2-succinyl-cyclohexa-2,4-diene-1-carboxylate = 2-succinylbenzoate + H2O. It participates in quinol/quinone metabolism; 1,4-dihydroxy-2-naphthoate biosynthesis; 1,4-dihydroxy-2-naphthoate from chorismate: step 4/7. The protein operates within cofactor biosynthesis; phylloquinone biosynthesis. Its function is as follows. Converts 2-succinyl-6-hydroxy-2,4-cyclohexadiene-1-carboxylate (SHCHC) to 2-succinylbenzoate (OSB). Does not show N-succinylamino acid racemase (NSAR) activity with N-succinyl-L-phenylglycine as substrate. The protein is o-succinylbenzoate synthase of Desulfotalea psychrophila (strain LSv54 / DSM 12343).